We begin with the raw amino-acid sequence, 360 residues long: MDIKQLLLSIILTVSVVNGRGRRINIYGAENGKSDIVQLRGPAEQLVYSSPIRERRPIFRNALLSNSPLRWSKMQDLDGNYLIPYVISGNYDTVERDTIKTAMEKIANNTCIRLIPRTNQPDYAEINNKKGQGCYASIGRFPGKNVVMLESNDDQSCIQEDTVIHELFHVIGLWHEHMRADRDAFINVLYKNIEPAQYPQFEKLSSRDATTYSVPYDYNSVMHYDENAFAKPGKISMMTKDSKFQKVIGHPKDASSNDYKKVCAIYHCSKCMHQDFQQIVEQEHIELNNPIITNAPVQQGDSCTDRLGICPMLKSREMLNCKVMATFCCSSCSAPTSTTTTTSGTPSDGSLWQRIKSIFQ.

The first 21 residues, 1–21, serve as a signal peptide directing secretion; it reads MDIKQLLLSIILTVSVVNGRG. In terms of domain architecture, Peptidase M12A spans 61–269; that stretch reads NALLSNSPLR…KKVCAIYHCS (209 aa). N108 carries an N-linked (GlcNAc...) asparagine glycan. 2 disulfides stabilise this stretch: C111-C268 and C134-C157. H165 contacts Zn(2+). Residue E166 is part of the active site. Residues H169 and H175 each contribute to the Zn(2+) site. Residues 299–336 form the PLAC domain; it reads QGDSCTDRLGICPMLKSREMLNCKVMATFCCSSCSAPT.

The cofactor is Zn(2+).

It localises to the secreted. Metalloprotease. The protein is Zinc metalloproteinase nas-5 (nas-5) of Caenorhabditis elegans.